The chain runs to 126 residues: MADLAKLVDDLSSLTVLEAAELAKMLEEKWGVSAAAAVAVAAGPAAGGAAAPAVEEKTEFTVVLAGAGDKKIEVIKEVRAITGLGLKEAKDLVEGAPKPVKESVAKDEAEKIKAQLEKAGAKVELK.

The protein belongs to the bacterial ribosomal protein bL12 family. As to quaternary structure, homodimer. Part of the ribosomal stalk of the 50S ribosomal subunit. Forms a multimeric L10(L12)X complex, where L10 forms an elongated spine to which 2 to 4 L12 dimers bind in a sequential fashion. Binds GTP-bound translation factors.

Forms part of the ribosomal stalk which helps the ribosome interact with GTP-bound translation factors. Is thus essential for accurate translation. The polypeptide is Large ribosomal subunit protein bL12 (Methylobacterium nodulans (strain LMG 21967 / CNCM I-2342 / ORS 2060)).